Here is a 402-residue protein sequence, read N- to C-terminus: MNDYKQFFPWFKNNKDVIYLDSSATSLKPQVVIDAIVDYYTKYSTNPHNTDSNFTFHTHEIMNETRANVAKFINANFDEIIFTSGATESLNLIANGLRPHLKKGDEIILTYIEHASNLLPWYKLRDDLGVKIIFANQKNQFPQLSDFLKVISPKTKVVSFASGGNLIGNVLDENLIIKNIKKIKPDVLVCVDATQSIQHRMFDVKKCKSDFMVFSAHKLLGPTGIGVAYIKNDLIKKMQPLKYGGGMNFSIDLNSYQLYDNYMKFEGGTPHVAGFYGFNAALKFLMDIGYNKIHEHELKITKYARDQLALIPEIKTYVQDATSSTITFSYNGVFCQDFANYLGSKNIIVRSGLSCAKIINNVIQTECAIRASFYIYNDFNDVDRLIKAIKEYQKGDELNGIL.

Lysine 218 is subject to N6-(pyridoxal phosphate)lysine.

Belongs to the class-V pyridoxal-phosphate-dependent aminotransferase family. Csd subfamily. The cofactor is pyridoxal 5'-phosphate.

It carries out the reaction (sulfur carrier)-H + L-cysteine = (sulfur carrier)-SH + L-alanine. Catalyzes the removal of elemental sulfur and selenium atoms from L-cysteine, L-cystine, L-selenocysteine, and L-selenocystine to produce L-alanine. This chain is Probable cysteine desulfurase (csd), found in Ureaplasma parvum serovar 3 (strain ATCC 700970).